Here is a 344-residue protein sequence, read N- to C-terminus: Dihydroorotase (344 aa).

2 residues coordinate Zn(2+): His14 and His16. Substrate is bound by residues 16 to 18 and Asn42; that span reads HLR. Zn(2+)-binding residues include Lys100, His137, and His175. Lys100 carries the N6-carboxylysine modification. His137 provides a ligand contact to substrate. Residue Leu220 participates in substrate binding. Residue Asp248 coordinates Zn(2+). The active site involves Asp248. Substrate contacts are provided by His252 and Ala264.

It belongs to the metallo-dependent hydrolases superfamily. DHOase family. Class II DHOase subfamily. In terms of assembly, homodimer. Zn(2+) serves as cofactor.

It carries out the reaction (S)-dihydroorotate + H2O = N-carbamoyl-L-aspartate + H(+). Its pathway is pyrimidine metabolism; UMP biosynthesis via de novo pathway; (S)-dihydroorotate from bicarbonate: step 3/3. In terms of biological role, catalyzes the reversible cyclization of carbamoyl aspartate to dihydroorotate. In Ralstonia pickettii (strain 12J), this protein is Dihydroorotase.